The primary structure comprises 643 residues: Cytoplasmic dynein 1 intermediate chain 1 (643 aa).

Composition is skewed to basic and acidic residues over residues 1 to 13 (MSDK…ELER) and 20 to 60 (QIRE…RETE). Disordered regions lie at residues 1–65 (MSDK…LLQS) and 96–123 (MSPS…RTLQ). Position 2 is an N-acetylserine (Ser2). Residues 2 to 123 (SDKSDLKAEL…DLGPLTRTLQ (122 aa)) form an interaction with DCTN1 region. A phosphoserine mark is found at Ser50 and Ser100. The span at 96–107 (MSPSSKSVSTPS) shows a compositional bias: low complexity. Thr105 carries the post-translational modification Phosphothreonine. A phosphoserine mark is found at Ser107 and Ser111. An interaction with DYNLT1 region spans residues 145–161 (KLGVSKVTQVDFLPREV). Positions 167 to 219 (ETQTPLATHQSEEDEEDEEMVEPKVGHDSELENQDKKQETKEAPPRELTEEEK) are disordered. Thr174 is modified (phosphothreonine). A phosphoserine mark is found at Ser177 and Ser195. Positions 187–219 (VEPKVGHDSELENQDKKQETKEAPPRELTEEEK) are enriched in basic and acidic residues. 7 WD repeats span residues 283-332 (SKHR…TTPE), 336-376 (HCQS…RTPV), 385-426 (AHTH…TPQE), 435-475 (SKPV…AGIG), 480-525 (GHQG…PLYS), 528-568 (DNAD…EVPT), and 574-613 (EGAY…VPHN). Ser633 is subject to Phosphoserine.

The protein belongs to the dynein intermediate chain family. In terms of assembly, homodimer. The cytoplasmic dynein 1 complex consists of two catalytic heavy chains (HCs) and a number of non-catalytic subunits presented by intermediate chains (ICs), light intermediate chains (LICs) and light chains (LCs); the composition seems to vary in respect to the IC, LIC and LC composition. The heavy chain homodimer serves as a scaffold for the probable homodimeric assembly of the respective non-catalytic subunits. The ICs and LICs bind directly to the HC dimer and the LCs assemble on the IC dimer. Isoform 1, isoform 2 and isoform 3 interact with DYNC1H1. Isoform 1, isoform 2 and isoform 3 interact with DYNLT3. Isoform 1, isoform 2 and isoform 3 interact with DYNLT1. Interacts with DCTN1. Interacts with MCRS1; the interaction is required for the proper distribution of centriolar satellites. High levels seen in the brain and testis, while a lower level expression is seen in the liver, spleen, kidney, lung, skeletal muscle and heart.

The protein resides in the cytoplasm. It is found in the chromosome. Its subcellular location is the centromere. It localises to the kinetochore. The protein localises to the cytoskeleton. The protein resides in the spindle pole. In terms of biological role, acts as one of several non-catalytic accessory components of the cytoplasmic dynein 1 complex that are thought to be involved in linking dynein to cargos and to adapter proteins that regulate dynein function. Cytoplasmic dynein 1 acts as a motor for the intracellular retrograde motility of vesicles and organelles along microtubules. The intermediate chains mediate the binding of dynein to dynactin via its 150 kDa component (p150-glued) DCTN1. May play a role in mediating the interaction of cytoplasmic dynein with membranous organelles and kinetochores. The protein is Cytoplasmic dynein 1 intermediate chain 1 (Dync1i1) of Rattus norvegicus (Rat).